The primary structure comprises 878 residues: Phosphoenolpyruvate carboxylase (878 aa).

Catalysis depends on residues H140 and K545.

This sequence belongs to the PEPCase type 1 family. It depends on Mg(2+) as a cofactor.

The enzyme catalyses oxaloacetate + phosphate = phosphoenolpyruvate + hydrogencarbonate. Its function is as follows. Forms oxaloacetate, a four-carbon dicarboxylic acid source for the tricarboxylic acid cycle. This chain is Phosphoenolpyruvate carboxylase, found in Ectopseudomonas mendocina (strain ymp) (Pseudomonas mendocina).